Consider the following 630-residue polypeptide: A-type voltage-gated potassium channel KCND2 (630 aa).

At 1–184 (MAAGVAAWLP…FENPHTSTMA (184 aa)) the chain is on the cytoplasmic side. An interaction with KCNIP1, KCNIP2, and other family members region spans residues 2 to 20 (AAGVAAWLPFARAAAIGWM). At Thr-38 the chain carries Phosphothreonine. The tract at residues 71 to 90 (ERDFFYHPETQQYFFDRDPD) is interaction with KCNIP1. The Zn(2+) site is built by His-105, Cys-111, Cys-132, and Cys-133. The helical transmembrane segment at 185 to 206 (LVFYYVTGFFIAVSVIANVVET) threads the bilayer. Residues 207–226 (VPCGSSPGHIKELPCGERYA) lie on the Extracellular side of the membrane. Residues 227–249 (VAFFCLDTACVMIFTVEYLLRLA) traverse the membrane as a helical segment. At 250–256 (AAPSRYR) the chain is on the cytoplasmic side. Residues 257–281 (FVRSVMSIIDVVAILPYYIGLVMTD) traverse the membrane as a helical segment. At 282 to 287 (NEDVSG) the chain is on the extracellular side. The chain crosses the membrane as a helical; Voltage-sensor span at residues 288 to 307 (AFVTLRVFRVFRIFKFSRHS). Topologically, residues 308–321 (QGLRILGYTLKSCA) are cytoplasmic. An S4-S5 linker region spans residues 308 to 321 (QGLRILGYTLKSCA). Residues 322–345 (SELGFLLFSLTMAIIIFATVMFYA) form a helical membrane-spanning segment. The Extracellular portion of the chain corresponds to 346–357 (EKGSSASKFTSI). An intramembrane region (helical) is located at residues 358-369 (PAAFWYTIVTMT). K(+) contacts are provided by Thr-370, Leu-371, Gly-372, and Tyr-373. Positions 370–375 (TLGYGD) match the Selectivity filter motif. Residues 370-377 (TLGYGDMV) lie within the membrane without spanning it. The Extracellular portion of the chain corresponds to 378 to 380 (PKT). Residues 381 to 403 (IAGKIFGSICSLSGVLVIALPVP) form a helical membrane-spanning segment. At 404–630 (VIVSNFSRIY…GGNIVRVSAL (227 aa)) the chain is on the cytoplasmic side. At Ser-438 the chain carries Phosphoserine. Residues 474–489 (FETQHHHLLHCLEKTT) form a required for dendritic targeting region. The interval 474–630 (FETQHHHLLH…GGNIVRVSAL (157 aa)) is important for normal channel activation and inactivation, for interaction with KCNIP2, and probably other family members as well. Phosphoserine is present on residues Ser-548, Ser-552, Ser-572, and Ser-575. Positions 600 to 630 (IPTPPVTTPEGDDRPESPEYSGGNIVRVSAL) are disordered. Thr-602 and Thr-607 each carry phosphothreonine. The residue at position 616 (Ser-616) is a Phosphoserine. The short motif at 627–630 (VSAL) is the PDZ-binding element.

Belongs to the potassium channel family. D (Shal) (TC 1.A.1.2) subfamily. Kv4.2/KCND2 sub-subfamily. Homotetramer or heterotetramer with KCND1 or KCND3. Associates with the regulatory subunits KCNIP2, KCNIP3 and KCNIP4. Interacts with the regulatory subunit KCNIP1; this interaction mediates the capture of both the N- and C-terminus of KCND2, preventing N-type inactivation and stabilizing the S6 conformation, thereby accelerating closed state inactivation and recovery. In vivo, probably exists as heteromeric complex containing variable proportions of KCND1, KCND2, KCND3, KCNIP1, KCNIP2, KCNIP3, KCNIP4, DPP6 and DPP10. The tetrameric channel can associate with up to four regulatory subunits, such as KCNIP2 or KCNIP4. Interaction with four KCNIP4 chains does not reduce interaction with DPP10. Interacts with DLG4 and NCS1/FREQ. Interacts with DLG1. Probably part of a complex consisting of KCNIP1, KCNIP2 isoform 3 and KCND2. Interacts with FLNA, FLNC and DPP10. Interacts (via S1 and S2 helices) with DPP6; this interaction stabilizes the conformation of the S1-S2 helices and facilitates S4 conformational change, including S4 sliding up and down, thereby accelerating activation, inactivation, and recovery. Phosphorylation at Ser-438 in response to MAPK activation is increased in stimulated dendrites. Interaction with KCNIP2 and DPP6 propomtes phosphorylation by PKA at Ser-552. Phosphorylation at Ser-552 has no effect on interaction with KCNIP3, but is required for the regulation of channel activity by KCNIP3. Phosphorylation at Ser-552 leads to KCND2 internalization. Phosphorylated by MAPK in response to signaling via the metabotropic glutamate receptor GRM5. Phosphorylation at Ser-616 is required for the down-regulation of neuronal A-type currents in response to signaling via GRM5. In terms of tissue distribution, detected in ovary, in corpus luteum and in granulosa and theca cells in the follicle (at protein level). Highly expressed throughout the brain. Detected in amygdala, caudate nucleus, cerebellum, hippocampus, substantia nigra and thalamus. Expression is not detectable or very low in heart, kidney, liver, lung, pancreas and skeletal muscle. Not detectable in human heart atrium.

The protein localises to the cell membrane. Its subcellular location is the cell projection. The protein resides in the dendrite. It localises to the synapse. It is found in the perikaryon. The protein localises to the postsynaptic cell membrane. Its subcellular location is the dendritic spine. The protein resides in the cell junction. The catalysed reaction is K(+)(in) = K(+)(out). In terms of biological role, voltage-gated potassium channel that mediates transmembrane potassium transport in excitable membranes, primarily in the brain. Mediates the major part of the dendritic A-type current I(SA) in brain neurons. This current is activated at membrane potentials that are below the threshold for action potentials. It regulates neuronal excitability, prolongs the latency before the first spike in a series of action potentials, regulates the frequency of repetitive action potential firing, shortens the duration of action potentials and regulates the back-propagation of action potentials from the neuronal cell body to the dendrites. Contributes to the regulation of the circadian rhythm of action potential firing in suprachiasmatic nucleus neurons, which regulates the circadian rhythm of locomotor activity. Functions downstream of the metabotropic glutamate receptor GRM5 and plays a role in neuronal excitability and in nociception mediated by activation of GRM5. Mediates the transient outward current I(to) in rodent heart left ventricle apex cells, but not in human heart, where this current is mediated by another family member. Forms tetrameric potassium-selective channels through which potassium ions pass in accordance with their electrochemical gradient. The channel alternates between opened and closed conformations in response to the voltage difference across the membrane. Can form functional homotetrameric channels and heterotetrameric channels that contain variable proportions of KCND2 and KCND3; channel properties depend on the type of pore-forming alpha subunits that are part of the channel. In vivo, membranes probably contain a mixture of heteromeric potassium channel complexes. Interaction with specific isoforms of the regulatory subunits KCNIP1, KCNIP2, KCNIP3 or KCNIP4 strongly increases expression at the cell surface and thereby increases channel activity; it modulates the kinetics of channel activation and inactivation, shifts the threshold for channel activation to more negative voltage values, shifts the threshold for inactivation to less negative voltages and accelerates recovery after inactivation. Likewise, interaction with DPP6 or DPP10 promotes expression at the cell membrane and regulates both channel characteristics and activity. Upon depolarization, the channel goes from a resting closed state (C state) to an activated but non-conducting state (C* state), from there, the channel may either inactivate (I state) or open (O state). This Homo sapiens (Human) protein is A-type voltage-gated potassium channel KCND2.